The sequence spans 405 residues: Tyrosine--tRNA ligase (405 aa).

The 'HIGH' region motif lies at 48 to 57; the sequence is PTAPDLHLGH. A 'KMSKS' region motif is present at residues 232 to 236; that stretch reads KMSKS. An ATP-binding site is contributed by Lys-235. The S4 RNA-binding domain occupies 343–404; the sequence is IWLPKLLADA…GKRRFVKVIF (62 aa).

It belongs to the class-I aminoacyl-tRNA synthetase family. TyrS type 2 subfamily. Homodimer.

It is found in the cytoplasm. The catalysed reaction is tRNA(Tyr) + L-tyrosine + ATP = L-tyrosyl-tRNA(Tyr) + AMP + diphosphate + H(+). Catalyzes the attachment of tyrosine to tRNA(Tyr) in a two-step reaction: tyrosine is first activated by ATP to form Tyr-AMP and then transferred to the acceptor end of tRNA(Tyr). This chain is Tyrosine--tRNA ligase, found in Desulfotalea psychrophila (strain LSv54 / DSM 12343).